A 207-amino-acid chain; its full sequence is Small ribosomal subunit protein uS4 (207 aa).

The interval 31–55 (KCKLDSKPGQHGRTSGARTSDYGTQ) is disordered. Residues 42–53 (GRTSGARTSDYG) are compositionally biased toward polar residues. The 61-residue stretch at 97-157 (SRLDNVVYRM…EQKKKQARIL (61 aa)) folds into the S4 RNA-binding domain.

Belongs to the universal ribosomal protein uS4 family. As to quaternary structure, part of the 30S ribosomal subunit. Contacts protein S5. The interaction surface between S4 and S5 is involved in control of translational fidelity.

Functionally, one of the primary rRNA binding proteins, it binds directly to 16S rRNA where it nucleates assembly of the body of the 30S subunit. With S5 and S12 plays an important role in translational accuracy. This chain is Small ribosomal subunit protein uS4, found in Paraburkholderia xenovorans (strain LB400).